Consider the following 430-residue polypeptide: MGKHEFLTPKAIANRIKAKGLQKLRWYCQMCQKQCRDENGFKCHCMSESHQRQMQVFGQAPDRVVEGFSEEFLDAFLTLLRRAHRHSRIAATVVYNEFIADRHHVHMNSTRWATLTEFVKFLGREGHCKVEDTPKGWFITYIDRDSEQAVKARLKRKRIKSDLAEDERQERMIARQIERAQQSMGKTNGELGDDASPDGSEGESGSADEYSDSENDHEGQEEDAKEANKAAGKIAIALQRAVPGPKVNPLDDKPKVKFGFEEEDEVSARDKEKEELAKKKGKDAINAAEARRSALDELMKEEEKAKERSNRKDYWLCPGIVVKVMSKSLAEKGYCKQKGVVKRVIDKYVGEIEMLESKHVLRVDQDELETVIPQIGGLVRIVNGAYRGSNARLLSVDTERFCAKVQVEKGLYDGKVLKAIEYEDICKIFH.

The C2H2-type zinc-finger motif lies at 28 to 50; sequence CQMCQKQCRDENGFKCHCMSESH. The interval 51 to 160 is winged helix-turn-helix (wHTH); sequence QRQMQVFGQA…KARLKRKRIK (110 aa). The stretch at 147 to 183 forms a coiled coil; it reads EQAVKARLKRKRIKSDLAEDERQERMIARQIERAQQS. The Nuclear localization signal (NLS) signature appears at 155-158; the sequence is KRKR. Disordered stretches follow at residues 179–230 and 261–284; these read RAQQ…ANKA and EEED…GKDA. The span at 209 to 224 shows a compositional bias: acidic residues; the sequence is EYSDSENDHEGQEEDA. Positions 261–278 are enriched in basic and acidic residues; that stretch reads EEEDEVSARDKEKEELAK. Positions 283–312 form a coiled coil; sequence DAINAAEARRSALDELMKEEEKAKERSNRK. Residues 319–370 form a C-terminal subdomain A region; the sequence is GIVVKVMSKSLAEKGYCKQKGVVKRVIDKYVGEIEMLESKHVLRVDQDELET. The interval 376–427 is C-terminal subdomain B; the sequence is GGLVRIVNGAYRGSNARLLSVDTERFCAKVQVEKGLYDGKVLKAIEYEDICK.

This sequence belongs to the KIN17 family.

The protein localises to the nucleus. This is KIN17-like protein from Oryza sativa subsp. indica (Rice).